The following is a 258-amino-acid chain: Type II restriction enzyme HincII (258 aa).

The enzyme catalyses Endonucleolytic cleavage of DNA to give specific double-stranded fragments with terminal 5'-phosphates.. A P subtype restriction enzyme that recognizes the double-stranded sequence 5'-GTYRAC-3' and cleaves after Y-3. The chain is Type II restriction enzyme HincII (hincIIR) from Haemophilus influenzae.